Consider the following 309-residue polypeptide: D-alanine--D-alanine ligase (309 aa).

The ATP-grasp domain maps to 99-304 (KRVLLQAGIP…FPDLVQKIVD (206 aa)). 132-187 (LKELGLPVVIKAPTQGSTIGTFIVREEGELEPAIAGALKYDLSFMAEAYLAGPEIT) is a binding site for ATP. Asp258, Glu271, and Asn273 together coordinate Mg(2+).

It belongs to the D-alanine--D-alanine ligase family. The cofactor is Mg(2+). Mn(2+) is required as a cofactor.

The protein localises to the cytoplasm. It catalyses the reaction 2 D-alanine + ATP = D-alanyl-D-alanine + ADP + phosphate + H(+). It functions in the pathway cell wall biogenesis; peptidoglycan biosynthesis. Its function is as follows. Cell wall formation. The chain is D-alanine--D-alanine ligase from Moorella thermoacetica (strain ATCC 39073 / JCM 9320).